Reading from the N-terminus, the 239-residue chain is Fibroblast growth factor 3 (239 aa).

A signal peptide spans 1-17; sequence MGLIWLLLLSLLEPGWP. Asn65 carries an N-linked (GlcNAc...) asparagine glycan. Positions 193 to 239 are disordered; sequence QLQSGLPRPPGKGVQPRRRRQKQSPDNLEPSHVQASRLGSQLEASAH. A compositionally biased stretch (polar residues) spans 225–239; sequence VQASRLGSQLEASAH.

The protein belongs to the heparin-binding growth factors family. In terms of assembly, interacts with FGFR1 and FGFR2. Affinity between fibroblast growth factors (FGFs) and their receptors is increased by heparan sulfate glycosaminoglycans that function as coreceptors.

Its subcellular location is the secreted. In terms of biological role, plays an important role in the regulation of embryonic development, cell proliferation, and cell differentiation. Required for normal ear development. This is Fibroblast growth factor 3 (FGF3) from Homo sapiens (Human).